A 569-amino-acid polypeptide reads, in one-letter code: Membrane protein insertase YidC (569 aa).

Residues 6 to 26 traverse the membrane as a helical segment; sequence FVLFLIFATSLLFLWDAWQKE. Composition is skewed to polar residues over residues 32–52 and 62–74; these read QGPKTAVQGTETQANTGTAGT and LASSVPQRGSTAE. Positions 32–81 are disordered; sequence QGPKTAVQGTETQANTGTAGTAETPVPGDQLASSVPQRGSTAENGAPVRA. 5 helical membrane passes run 348 to 368, 375 to 395, 442 to 462, 479 to 499, and 519 to 539; these read VVDYGWLTVIGAPLFWLLSLF, WGVAIILLTMSVKLAFFPLSA, GGCLPILVQIPVFISLYWVLL, LSAPDPYYVLPVIMGISMFLQ, and PLAFSVFFFFFPAGLVLYSLV.

Belongs to the OXA1/ALB3/YidC family. Type 1 subfamily. In terms of assembly, interacts with the Sec translocase complex via SecD. Specifically interacts with transmembrane segments of nascent integral membrane proteins during membrane integration.

Its subcellular location is the cell inner membrane. Required for the insertion and/or proper folding and/or complex formation of integral membrane proteins into the membrane. Involved in integration of membrane proteins that insert both dependently and independently of the Sec translocase complex, as well as at least some lipoproteins. Aids folding of multispanning membrane proteins. This is Membrane protein insertase YidC from Nitrosospira multiformis (strain ATCC 25196 / NCIMB 11849 / C 71).